Here is an 840-residue protein sequence, read N- to C-terminus: Phosphatidylglycerol lysyltransferase (840 aa).

Over methionine 1–arginine 8 the chain is Cytoplasmic. Residues leucine 9–leucine 29 traverse the membrane as a helical segment. The Extracellular portion of the chain corresponds to tyrosine 30–tyrosine 52. The chain crosses the membrane as a helical span at residues leucine 53–isoleucine 73. At leucine 74 to lysine 89 the chain is on the cytoplasmic side. The chain crosses the membrane as a helical span at residues isoleucine 90–glycine 110. Over phenylalanine 111–alanine 129 the chain is Extracellular. The helical transmembrane segment at isoleucine 130–leucine 150 threads the bilayer. Residues histidine 151–tryptophan 167 lie on the Cytoplasmic side of the membrane. Residues isoleucine 168 to isoleucine 188 traverse the membrane as a helical segment. Over aspartate 189–lysine 193 the chain is Extracellular. A helical membrane pass occupies residues tyrosine 194 to leucine 216. Topologically, residues serine 217 to threonine 229 are cytoplasmic. The helical transmembrane segment at valine 230–phenylalanine 250 threads the bilayer. Residues glycine 251–valine 271 lie on the Extracellular side of the membrane. The helical transmembrane segment at leucine 272 to isoleucine 292 threads the bilayer. At leucine 293 to serine 335 the chain is on the cytoplasmic side. Residues phenylalanine 336–isoleucine 356 form a helical membrane-spanning segment. The Extracellular portion of the chain corresponds to valine 357–histidine 366. Residues phenylalanine 367–valine 387 traverse the membrane as a helical segment. The Cytoplasmic segment spans residues arginine 388 to serine 394. The next 2 membrane-spanning stretches (helical) occupy residues arginine 395 to threonine 415 and tyrosine 416 to tyrosine 436. Over arginine 437–arginine 450 the chain is Cytoplasmic. The helical transmembrane segment at leucine 451 to glutamate 471 threads the bilayer. The Extracellular segment spans residues threonine 472–tyrosine 490. The helical transmembrane segment at tyrosine 491–glycine 511 threads the bilayer. Residues serine 512 to lysine 840 are Cytoplasmic-facing.

This sequence belongs to the LPG synthase family.

The protein localises to the cell membrane. It catalyses the reaction L-lysyl-tRNA(Lys) + a 1,2-diacyl-sn-glycero-3-phospho-(1'-sn-glycerol) = a 1,2-diacyl-sn-glycero-3-phospho-1'-(3'-O-L-lysyl)-sn-glycerol + tRNA(Lys). Functionally, catalyzes the transfer of a lysyl group from L-lysyl-tRNA(Lys) to membrane-bound phosphatidylglycerol (PG), which produces lysylphosphatidylglycerol (LPG), a major component of the bacterial membrane with a positive net charge. LPG synthesis contributes to bacterial virulence as it is involved in the resistance mechanism against cationic antimicrobial peptides (CAMP) produces by the host's immune system (defensins, cathelicidins) and by the competing microorganisms (bacteriocins). In fact, the modification of anionic phosphatidylglycerol with positively charged L-lysine results in repulsion of the peptides. The protein is Phosphatidylglycerol lysyltransferase (mprF) of Staphylococcus haemolyticus (strain JCSC1435).